The sequence spans 349 residues: Phosphoribosylformylglycinamidine cyclo-ligase (349 aa).

This sequence belongs to the AIR synthase family.

Its subcellular location is the cytoplasm. It carries out the reaction 2-formamido-N(1)-(5-O-phospho-beta-D-ribosyl)acetamidine + ATP = 5-amino-1-(5-phospho-beta-D-ribosyl)imidazole + ADP + phosphate + H(+). Its pathway is purine metabolism; IMP biosynthesis via de novo pathway; 5-amino-1-(5-phospho-D-ribosyl)imidazole from N(2)-formyl-N(1)-(5-phospho-D-ribosyl)glycinamide: step 2/2. This chain is Phosphoribosylformylglycinamidine cyclo-ligase, found in Listeria monocytogenes serotype 4b (strain CLIP80459).